The sequence spans 378 residues: MAQTFSDEHFTLGIEEEYLLVDAETYDLAEAPDALMAACADKLSSKVSPEFLQCQIEVGTGVCASIADARADLRNLRATVAECAGRFGLAPIAVSCHPFADWKDQSHTDKDRYNQLARDLGGVVERMLICGAHCHVGLPSENDRVDIMRQMTYFLPHLLALSTSSPFWQGRDTGLASYRLTVFDNLPRTGLPPSFASFDEFQRTVDLLVDMEMIEDSSKIWWDLRPSAAFPTLETRICDVSPRLEDQLSLSALIQCLTRMLMRLRGSNQRWRVYDRFLINENRWRAQRYGVSDGLIDFGRGAVVPLPELVDELIELTEQDAEALGCVDEVQRLRDLAVETSSDRQRKIYKGTRAAGGSHQAAMRSVVEHLLEDFHVDL.

This sequence belongs to the glutamate--cysteine ligase type 2 family. YbdK subfamily.

It catalyses the reaction L-cysteine + L-glutamate + ATP = gamma-L-glutamyl-L-cysteine + ADP + phosphate + H(+). Functionally, ATP-dependent carboxylate-amine ligase which exhibits weak glutamate--cysteine ligase activity. In Jannaschia sp. (strain CCS1), this protein is Putative glutamate--cysteine ligase 2.